We begin with the raw amino-acid sequence, 829 residues long: Telomere length regulation protein TEL2 homolog (829 aa).

2 disordered regions span residues 446 to 493 (SADF…DDLV) and 620 to 641 (SEKP…PHSI). The span at 456–466 (SSPSKSPLSSP) shows a compositional bias: low complexity. A compositionally biased stretch (basic and acidic residues) spans 467–480 (EVREKSKVKVKADQ). Positions 482 to 493 (SDSDLDSDDDLV) are enriched in acidic residues. A compositionally biased stretch (polar residues) spans 629–641 (AESGSVNTDPHSI).

The protein belongs to the TEL2 family.

It localises to the cytoplasm. The protein localises to the membrane. Its subcellular location is the nucleus. The protein resides in the chromosome. It is found in the telomere. Regulator of the DNA damage response (DDR). Part of the TTT complex that is required to stabilize protein levels of the phosphatidylinositol 3-kinase-related protein kinase (PIKK) family proteins. Promotes assembly, stabilizes and maintains the activity of TORC complexes, which regulate cell growth and survival in response to nutrient and hormonal signals. May be involved in telomere length regulation. This is Telomere length regulation protein TEL2 homolog (telo2) from Xenopus tropicalis (Western clawed frog).